We begin with the raw amino-acid sequence, 288 residues long: MALFRKKDKYIRITPNNSLKGSVSHNVPEVPDELFAKCPACKHMIYKKDLGLAKICPTCSYNFRISAQERLTLTVDEGSFQELFTSIETKDPLRFPGYQEKLQKAKEITGLHEAVLTGKAMVKGQQIALAIMDSHFIMASMGTVVGEKITRLFELAIEENLPVVIFTASGGARMQEGIMSLMQMAKVSAAVKRHSNAGLFYLTILTDPTTGGVTASFAMEGDIILAEPQSLVGFAGRRVIETTVRENLPDNFQKAEFLQDHGFVDAIVKRTELRDKIAHLVSFHGGGQ.

One can recognise a CoA carboxyltransferase N-terminal domain in the interval 34–288 (LFAKCPACKH…HLVSFHGGGQ (255 aa)). Zn(2+)-binding residues include cysteine 38, cysteine 41, cysteine 56, and cysteine 59. The C4-type zinc-finger motif lies at 38-59 (CPACKHMIYKKDLGLAKICPTC).

Belongs to the AccD/PCCB family. Acetyl-CoA carboxylase is a heterohexamer composed of biotin carboxyl carrier protein (AccB), biotin carboxylase (AccC) and two subunits each of ACCase subunit alpha (AccA) and ACCase subunit beta (AccD). The cofactor is Zn(2+).

It localises to the cytoplasm. It catalyses the reaction N(6)-carboxybiotinyl-L-lysyl-[protein] + acetyl-CoA = N(6)-biotinyl-L-lysyl-[protein] + malonyl-CoA. The protein operates within lipid metabolism; malonyl-CoA biosynthesis; malonyl-CoA from acetyl-CoA: step 1/1. Component of the acetyl coenzyme A carboxylase (ACC) complex. Biotin carboxylase (BC) catalyzes the carboxylation of biotin on its carrier protein (BCCP) and then the CO(2) group is transferred by the transcarboxylase to acetyl-CoA to form malonyl-CoA. In Streptococcus pyogenes serotype M49 (strain NZ131), this protein is Acetyl-coenzyme A carboxylase carboxyl transferase subunit beta.